The sequence spans 133 residues: Large ribosomal subunit protein bL17 (133 aa).

The protein belongs to the bacterial ribosomal protein bL17 family. Part of the 50S ribosomal subunit. Contacts protein L32.

The polypeptide is Large ribosomal subunit protein bL17 (Alteromonas mediterranea (strain DSM 17117 / CIP 110805 / LMG 28347 / Deep ecotype)).